Here is a 330-residue protein sequence, read N- to C-terminus: Free fatty acid receptor 2 (330 aa).

Over 1–8 the chain is Extracellular; the sequence is MTPDWHSS. The helical transmembrane segment at 9-29 threads the bilayer; sequence LILTAYILIFLTGLPANLLAL. The Cytoplasmic segment spans residues 30–43; the sequence is RAFVSRVRQPQPAP. Residues 44-64 form a helical membrane-spanning segment; it reads VHILLLNLTLADLLLLLLLPF. The Extracellular portion of the chain corresponds to 65-79; sequence RIVEAASNFRWYLPK. The chain crosses the membrane as a helical span at residues 80–100; it reads IVCALTGFGFYSSIYCSTWLL. Residues 101–126 are Cytoplasmic-facing; sequence AGISIERYLGVAFPVQYKLSRRPLYG. A helical membrane pass occupies residues 127–147; that stretch reads VIAALVAWIMSFGHCTIVIIV. Residues 148 to 184 lie on the Extracellular side of the membrane; sequence QYLNSTEQVGTENQITCYENFTQAQLDVVLPVRLELC. 2 N-linked (GlcNAc...) asparagine glycosylation sites follow: asparagine 151 and asparagine 167. The helical transmembrane segment at 185–205 threads the bilayer; that stretch reads LVLFFVPMTVTIFCYWRFVWI. Residues 206–219 are Cytoplasmic-facing; that stretch reads MLTQPHVGAQRRRR. A helical transmembrane segment spans residues 220–240; it reads AVGLAVVTLLNFLVCFGPYNM. Over 241 to 255 the chain is Extracellular; the sequence is SHLVGFHLRQSPSWR. Residues 256-276 traverse the membrane as a helical segment; sequence VEAVVFSSLNASLDPLLFYFS. At 277–330 the chain is on the cytoplasmic side; that stretch reads SSVVRRAFGKGLLLLRNPGSSMLGRGAEETVEGTKTDRGGSQTEGAQSSDFVTE. Positions 300 to 330 are disordered; the sequence is GRGAEETVEGTKTDRGGSQTEGAQSSDFVTE. The span at 302 to 314 shows a compositional bias: basic and acidic residues; the sequence is GAEETVEGTKTDR. Positions 315 to 330 are enriched in polar residues; the sequence is GGSQTEGAQSSDFVTE.

The protein belongs to the G-protein coupled receptor 1 family. In terms of assembly, interacts with FCN1 (via Fibrinogen C-terminal domain). As to expression, detected in whole wall and separated mucosa in the distal ileum and colon. Expressed by enteroendocrine cells expressing peptide YY (PYY) (at protein level).

The protein localises to the cell membrane. Its function is as follows. G protein-coupled receptor that is activated by a major product of dietary fiber digestion, the short chain fatty acids (SCFAs), and that plays a role in the regulation of whole-body energy homeostasis and in intestinal immunity. In omnivorous mammals, the short chain fatty acids acetate, propionate and butyrate are produced primarily by the gut microbiome that metabolizes dietary fibers. SCFAs serve as a source of energy but also act as signaling molecules. That G protein-coupled receptor is probably coupled to the pertussis toxin-sensitive, G(i/o)-alpha family of G proteins but also to the Gq family. Its activation results in the formation of inositol 1,4,5-trisphosphate, the mobilization of intracellular calcium, the phosphorylation of the MAPK3/ERK1 and MAPK1/ERK2 kinases and the inhibition of intracellular cAMP accumulation. May play a role in glucose homeostasis by regulating the secretion of GLP-1, in response to short-chain fatty acids accumulating in the intestine. May also regulate the production of LEP/Leptin, a hormone acting on the central nervous system to inhibit food intake. Finally, may also regulate whole-body energy homeostasis through adipogenesis regulating both differentiation and lipid storage of adipocytes. In parallel to its role in energy homeostasis, may also mediate the activation of the inflammatory and immune responses by SCFA in the intestine, regulating the rapid production of chemokines and cytokines. May also play a role in the resolution of the inflammatory response and control chemotaxis in neutrophils. In addition to SCFAs, may also be activated by the extracellular lectin FCN1 in a process leading to activation of monocytes and inducing the secretion of interleukin-8/IL-8 in response to the presence of microbes. The chain is Free fatty acid receptor 2 (Ffar2) from Rattus norvegicus (Rat).